The chain runs to 446 residues: Xanthone prenyltransferase A (446 aa).

R113, K199, Y201, R263, K265, Y267, Y369, and Y440 together coordinate dimethylallyl diphosphate.

Belongs to the tryptophan dimethylallyltransferase family.

It functions in the pathway secondary metabolite biosynthesis. In terms of biological role, xanthone prenyltransferase involved in the conversion of monodictyphenone to the prenyl xanthones such as emericellin, shamixanthone and epishamixanthone. Monodictyphenone is first converted to variecoxanthone A via a paeciloxanthone intermediate by the consecutive actions of the FAD-dependent monooxygenase mdpD and the xanthone prenyltransferase xptB. XptB catalyzes regular O-prenylation at the hydroxy group of C-7 of the xanthone ring. Variecoxanthone A is further prenylated to emericellin by xptA before being reduced to shamixanthone and epishamixanthone by the dehydrogenase xptC. The polypeptide is Xanthone prenyltransferase A (Emericella nidulans (strain FGSC A4 / ATCC 38163 / CBS 112.46 / NRRL 194 / M139) (Aspergillus nidulans)).